We begin with the raw amino-acid sequence, 159 residues long: Protein-export protein SecB (159 aa).

This sequence belongs to the SecB family. As to quaternary structure, homotetramer, a dimer of dimers. One homotetramer interacts with 1 SecA dimer.

It localises to the cytoplasm. Its function is as follows. One of the proteins required for the normal export of preproteins out of the cell cytoplasm. It is a molecular chaperone that binds to a subset of precursor proteins, maintaining them in a translocation-competent state. It also specifically binds to its receptor SecA. This is Protein-export protein SecB from Hahella chejuensis (strain KCTC 2396).